A 486-amino-acid polypeptide reads, in one-letter code: 2-hydroxymuconic semialdehyde dehydrogenase (486 aa).

Active-site residues include Glu254 and Cys288.

This sequence belongs to the aldehyde dehydrogenase family. As to quaternary structure, homodimer.

It catalyses the reaction (2Z,4E)-2-hydroxy-6-oxohexa-2,4-dienoate + NAD(+) + H2O = (2Z,4E)-2-hydroxyhexa-2,4-dienedioate + NADH + 2 H(+). It functions in the pathway aromatic compound metabolism; benzoate degradation via hydroxylation. 2-hydroxymuconic acid semialdehyde can be converted to 2-hydroxypent-2,4-dienoate either directly by the action of 2-hydroxymuconic semialdehyde hydrolase (HMSH) or by the action of three sequential enzymes, the first of which is HMSD. Can oxidize not only 2-hydroxymuconic semialdehyde and its analogs but also benzaldehyde and its analogs. The protein is 2-hydroxymuconic semialdehyde dehydrogenase (xylG) of Pseudomonas putida (Arthrobacter siderocapsulatus).